Here is a 502-residue protein sequence, read N- to C-terminus: MASKKLGADFHGTFSYLDDVPFKTGDKFKTPAKVGLPIGFSLPDCLQVVREVQYDFSLEKKTIEWAEEIKKIEEAEREAECKIAEAEAKVNSKSGPEGDSKMSFSKTHSTATMPPPINPILASLQHNSILTPTRVSSSATKQKVLSPPHIKADFNLADFECEEDPFDNLELKTIDEKEELRNILVGTTGPIMAQLLDNNLPRGGSGSVLQDEEVLASLERATLDFKPLHKPNGFITLPQLGNCEKMSLSSKVSLPPIPAVSNIKSLSFPKLDSDDSNQKTAKLASTFHSTSCLRNGTFQNSLKPSTQSSASELNGHHTLGLSALNLDSGTEMPALTSSQMPSLSVLSVCTEESSPPNTGPTVTPPNFSVSQVPNMPSCPQAYSELQMLSPSERQCVETVVNMGYSYECVLRAMKKKGENIEQILDYLFAHGQLCEKGFDPLLVEEALEMHQCSEEKMMEFLQLMSKFKEMGFELKDIKEVLLLHNNDQDNALEDLMARAGAS.

Residues 1 to 95 (MASKKLGADF…AEAKVNSKSG (95 aa)) are interaction with ESCRT-I. The 47-residue stretch at 17–63 (LDDVPFKTGDKFKTPAKVGLPIGFSLPDCLQVVREVQYDFSLEKKTI) folds into the UMA domain. A compositionally biased stretch (basic and acidic residues) spans 86 to 100 (AEAKVNSKSGPEGDS). The segment at 86–117 (AEAKVNSKSGPEGDSKMSFSKTHSTATMPPPI) is disordered. The segment covering 102 to 112 (MSFSKTHSTAT) has biased composition (polar residues). A phosphoserine mark is found at serine 146, serine 205, and serine 289. An interaction with PTPN23 region spans residues 260–290 (VSNIKSLSFPKLDSDDSNQKTAKLASTFHST). 2 UBA domains span residues 389–430 (SPSE…LFAH) and 451–498 (QCSE…LMAR).

As to quaternary structure, component of an ESCRT-I complex (endosomal sorting complex required for transport I) which consists of TSG101, VPS28, VPS37A and UBAP1 in a 1:1:1:1 stoichiometry. Interacts with PTPN23. Interacts (via UBA domains) with ubiquitinated proteins. Ubiquitous. Highly expressed in heart, brain, placenta, lung, liver, skeletal muscle and pancreas.

It is found in the cytoplasm. The protein resides in the cytosol. Its subcellular location is the endosome. Functionally, component of the ESCRT-I complex, a regulator of vesicular trafficking process. Binds to ubiquitinated cargo proteins and is required for the sorting of endocytic ubiquitinated cargos into multivesicular bodies (MVBs). Plays a role in the proteasomal degradation of ubiquitinated cell-surface proteins, such as EGFR and BST2. This Homo sapiens (Human) protein is Ubiquitin-associated protein 1.